The chain runs to 160 residues: 6,7-dimethyl-8-ribityllumazine synthase (160 aa).

5-amino-6-(D-ribitylamino)uracil is bound by residues W27, 59–61 (AIE), and 81–83 (VVI). 86–87 (QT) lines the (2S)-2-hydroxy-3-oxobutyl phosphate pocket. The active-site Proton donor is H89. Residue N114 coordinates 5-amino-6-(D-ribitylamino)uracil. R128 lines the (2S)-2-hydroxy-3-oxobutyl phosphate pocket.

It belongs to the DMRL synthase family. Homopentamer.

It carries out the reaction (2S)-2-hydroxy-3-oxobutyl phosphate + 5-amino-6-(D-ribitylamino)uracil = 6,7-dimethyl-8-(1-D-ribityl)lumazine + phosphate + 2 H2O + H(+). It functions in the pathway cofactor biosynthesis; riboflavin biosynthesis; riboflavin from 2-hydroxy-3-oxobutyl phosphate and 5-amino-6-(D-ribitylamino)uracil: step 1/2. In terms of biological role, catalyzes the formation of 6,7-dimethyl-8-ribityllumazine by condensation of 5-amino-6-(D-ribitylamino)uracil with 3,4-dihydroxy-2-butanone 4-phosphate. This is the penultimate step in the biosynthesis of riboflavin. This Mycobacterium sp. (strain JLS) protein is 6,7-dimethyl-8-ribityllumazine synthase.